A 154-amino-acid chain; its full sequence is Aspartate 1-decarboxylase 1 (154 aa).

The active-site Schiff-base intermediate with substrate; via pyruvic acid is the S26. S26 is subject to Pyruvic acid (Ser). T58 lines the substrate pocket. The active-site Proton donor is the Y59. Position 74 to 76 (74 to 76) interacts with substrate; it reads GAA. Residues 129 to 154 form a disordered region; the sequence is VGLVRGDTNSPQPSLSEQAGDPRRAQ. A compositionally biased stretch (polar residues) spans 135–145; the sequence is DTNSPQPSLSE.

This sequence belongs to the PanD family. Heterooctamer of four alpha and four beta subunits. The cofactor is pyruvate. In terms of processing, is synthesized initially as an inactive proenzyme, which is activated by self-cleavage at a specific serine bond to produce a beta-subunit with a hydroxyl group at its C-terminus and an alpha-subunit with a pyruvoyl group at its N-terminus.

Its subcellular location is the cytoplasm. It catalyses the reaction L-aspartate + H(+) = beta-alanine + CO2. Its pathway is cofactor biosynthesis; (R)-pantothenate biosynthesis; beta-alanine from L-aspartate: step 1/1. Catalyzes the pyruvoyl-dependent decarboxylation of aspartate to produce beta-alanine. This Frankia casuarinae (strain DSM 45818 / CECT 9043 / HFP020203 / CcI3) protein is Aspartate 1-decarboxylase 1.